We begin with the raw amino-acid sequence, 188 residues long: Probable nicotinate-nucleotide adenylyltransferase (188 aa).

Belongs to the NadD family.

The catalysed reaction is nicotinate beta-D-ribonucleotide + ATP + H(+) = deamido-NAD(+) + diphosphate. It functions in the pathway cofactor biosynthesis; NAD(+) biosynthesis; deamido-NAD(+) from nicotinate D-ribonucleotide: step 1/1. Catalyzes the reversible adenylation of nicotinate mononucleotide (NaMN) to nicotinic acid adenine dinucleotide (NaAD). This Salinispora arenicola (strain CNS-205) protein is Probable nicotinate-nucleotide adenylyltransferase.